The following is a 197-amino-acid chain: Putative sulfur carrier protein aq_1421 (197 aa).

The active-site Cysteine persulfide intermediate is the Cys17.

This sequence belongs to the sulfur carrier protein TusA family.

The sequence is that of Putative sulfur carrier protein aq_1421 from Aquifex aeolicus (strain VF5).